The following is a 376-amino-acid chain: Putative aryl-alcohol dehydrogenase AAD14 (376 aa).

The active-site Proton donor is the Tyr76. Position 151 (His151) interacts with substrate. NADP(+) is bound at residue Asp236–Lys246.

It belongs to the aldo/keto reductase family. Aldo/keto reductase 2 subfamily.

This is Putative aryl-alcohol dehydrogenase AAD14 (AAD14) from Saccharomyces cerevisiae (strain ATCC 204508 / S288c) (Baker's yeast).